Here is a 2005-residue protein sequence, read N- to C-terminus: Sodium channel protein type 2 subunit alpha (2005 aa).

The Cytoplasmic portion of the chain corresponds to methionine 1 to serine 129. Serine 4 bears the Phosphoserine mark. A disordered region spans residues arginine 28 to serine 61. Residue lysine 38 forms a Glycyl lysine isopeptide (Lys-Gly) (interchain with G-Cter in SUMO1) linkage. An I repeat occupies isoleucine 111 to glutamine 456. A helical transmembrane segment spans residues leucine 130–methionine 148. Topologically, residues serine 149–threonine 155 are extracellular. The helical transmembrane segment at lysine 156 to alanine 176 threads the bilayer. The Cytoplasmic portion of the chain corresponds to arginine 177–proline 190. The chain crosses the membrane as a helical span at residues tryptophan 191 to valine 208. At aspartate 209 to serine 214 the chain is on the extracellular side. An N-linked (GlcNAc...) asparagine glycan is attached at asparagine 212. The helical transmembrane segment at alanine 215–isoleucine 231 threads the bilayer. Residues proline 232–aspartate 250 lie on the Cytoplasmic side of the membrane. The helical transmembrane segment at valine 251 to phenylalanine 270 threads the bilayer. Residues methionine 271–threonine 369 lie on the Extracellular side of the membrane. A disulfide bond links cysteine 278 and cysteine 338. N-linked (GlcNAc...) asparagine glycosylation is found at asparagine 285, asparagine 291, asparagine 297, asparagine 303, asparagine 308, and asparagine 340. The segment at residues phenylalanine 370–leucine 394 is an intramembrane region (pore-forming). The Extracellular segment spans residues arginine 395 to tyrosine 401. The chain crosses the membrane as a helical span at residues methionine 402–alanine 422. At valine 423 to proline 759 the chain is on the cytoplasmic side. 17 positions are modified to phosphoserine: serine 468, serine 471, serine 484, serine 526, serine 528, serine 531, serine 553, serine 554, serine 558, serine 573, serine 576, serine 589, serine 610, serine 623, serine 686, serine 687, and serine 721. The interval serine 494–glutamate 529 is disordered. A compositionally biased stretch (basic and acidic residues) spans lysine 511–glutamate 529. A disordered region spans residues glutamate 590–serine 610. Residues aspartate 596 to serine 610 show a composition bias toward basic and acidic residues. The stretch at cysteine 741–glycine 1013 is one II repeat. A helical membrane pass occupies residues phenylalanine 760 to methionine 778. Residues glutamate 779 to serine 789 lie on the Extracellular side of the membrane. A helical membrane pass occupies residues valine 790 to lysine 809. Residues isoleucine 810–tryptophan 823 are Cytoplasmic-facing. A helical membrane pass occupies residues asparagine 824–valine 843. The Extracellular portion of the chain corresponds to glutamate 844 to glycine 845. Residues leucine 846 to serine 863 traverse the membrane as a helical segment. Residues tryptophan 864–glycine 879 lie on the Cytoplasmic side of the membrane. Residues alanine 880–valine 898 traverse the membrane as a helical segment. Topologically, residues glycine 899–aspartate 927 are extracellular. Cysteine 912 and cysteine 918 are joined by a disulfide. The binds SCN2B stretch occupies residues aspartate 917–cysteine 918. Positions phenylalanine 928 to tryptophan 948 form an intramembrane region, pore-forming. Over aspartate 949–threonine 961 the chain is Extracellular. A disulfide bond links cysteine 950 and cysteine 959. A helical membrane pass occupies residues valine 962–leucine 982. Topologically, residues leucine 983 to tryptophan 1209 are cytoplasmic. A disordered region spans residues glutamate 1120–leucine 1165. A compositionally biased stretch (acidic residues) spans glutamate 1155–leucine 1165. The stretch at lysine 1190–leucine 1504 is one III repeat. The helical transmembrane segment at phenylalanine 1210 to phenylalanine 1227 threads the bilayer. Topologically, residues glutamate 1228–threonine 1240 are extracellular. A helical membrane pass occupies residues methionine 1241–leucine 1259. The Cytoplasmic portion of the chain corresponds to lysine 1260–alanine 1273. Residues tryptophan 1274–asparagine 1292 traverse the membrane as a helical segment. The Extracellular segment spans residues alanine 1293–glycine 1300. The helical transmembrane segment at alanine 1301–arginine 1319 threads the bilayer. Residues phenylalanine 1320–serine 1336 lie on the Cytoplasmic side of the membrane. A helical membrane pass occupies residues isoleucine 1337–valine 1356. At asparagine 1357–valine 1408 the chain is on the extracellular side. The cysteines at positions 1366 and 1386 are disulfide-linked. Residues asparagine 1368, asparagine 1382, and asparagine 1393 are each glycosylated (N-linked (GlcNAc...) asparagine). Positions glycine 1409–alanine 1430 form an intramembrane region, pore-forming. The Extracellular segment spans residues alanine 1431–leucine 1447. Residues tyrosine 1448–isoleucine 1469 form a helical membrane-spanning segment. Over glycine 1470–valine 1532 the chain is Cytoplasmic. Residue serine 1506 is modified to Phosphoserine; by PKC. The IV repeat unit spans residues isoleucine 1513–glutamine 1811. The helical transmembrane segment at phenylalanine 1533–valine 1550 threads the bilayer. Topologically, residues glutamate 1551 to asparagine 1561 are extracellular. The chain crosses the membrane as a helical span at residues isoleucine 1562 to leucine 1580. Topologically, residues lysine 1581 to isoleucine 1592 are cytoplasmic. The chain crosses the membrane as a helical span at residues glycine 1593 to phenylalanine 1610. Topologically, residues leucine 1611–threonine 1623 are extracellular. A helical transmembrane segment spans residues leucine 1624–isoleucine 1640. The Cytoplasmic segment spans residues lysine 1641–alanine 1659. Residues leucine 1660–phenylalanine 1677 traverse the membrane as a helical segment. At glycine 1678 to threonine 1699 the chain is on the extracellular side. Residues phenylalanine 1700 to proline 1722 constitute an intramembrane region (pore-forming). Residues isoleucine 1723–glycine 1752 are Extracellular-facing. An intrachain disulfide couples cysteine 1731 to cysteine 1746. The helical transmembrane segment at isoleucine 1753 to isoleucine 1775 threads the bilayer. Residues leucine 1776 to lysine 2005 lie on the Cytoplasmic side of the membrane. The IQ domain maps to glutamate 1905–lysine 1934. Phosphoserine is present on serine 1930. Over residues aspartate 1935–aspartate 1964 the composition is skewed to basic and acidic residues. Positions aspartate 1935 to lysine 2005 are disordered. Threonine 1943, threonine 1963, and threonine 1966 each carry phosphothreonine. A Phosphoserine modification is found at serine 1971. Residues threonine 1979–lysine 2005 are compositionally biased toward basic and acidic residues.

This sequence belongs to the sodium channel (TC 1.A.1.10) family. Nav1.2/SCN2A subfamily. As to quaternary structure, heterooligomer of a large alpha subunit and a smaller beta subunit. Heterooligomer with SCN2B or SCN4B; disulfide-linked. Heterooligomer with SCN1B or SCN3B; non-covalently linked. Interacts with NEDD4L. Interacts with CALM. Interacts with TMEM233. Interacts with the conotoxin GVIIJ. Interacts with the spider beta/delta-theraphotoxin-Pre1a. Interacts with the conotoxin KIIIA. Interacts with the spider protoxin-II. In terms of processing, may be ubiquitinated by NEDD4L; which would promote its endocytosis. Phosphorylation at Ser-1506 by PKC in a highly conserved cytoplasmic loop slows inactivation of the sodium channel and reduces peak sodium currents. Post-translationally, sumoylated at Lys-38. Sumoylation is induced by hypoxia, increases voltage-gated sodium current and mediates the early response to acute hypoxia in neurons. Sumoylated SCN2A is located at the cell membrane.

The protein localises to the cell membrane. It catalyses the reaction Na(+)(in) = Na(+)(out). Its function is as follows. Mediates the voltage-dependent sodium ion permeability of excitable membranes. Assuming opened or closed conformations in response to the voltage difference across the membrane, the protein forms a sodium-selective channel through which Na(+) ions may pass in accordance with their electrochemical gradient. Implicated in the regulation of hippocampal replay occurring within sharp wave ripples (SPW-R) important for memory. This is Sodium channel protein type 2 subunit alpha from Homo sapiens (Human).